The following is a 189-amino-acid chain: Crossover junction endodeoxyribonuclease RuvC (189 aa).

Catalysis depends on residues Asp7, Glu68, and Asp141. Mg(2+) contacts are provided by Asp7, Glu68, and Asp141.

The protein belongs to the RuvC family. In terms of assembly, homodimer which binds Holliday junction (HJ) DNA. The HJ becomes 2-fold symmetrical on binding to RuvC with unstacked arms; it has a different conformation from HJ DNA in complex with RuvA. In the full resolvosome a probable DNA-RuvA(4)-RuvB(12)-RuvC(2) complex forms which resolves the HJ. The cofactor is Mg(2+).

The protein resides in the cytoplasm. It carries out the reaction Endonucleolytic cleavage at a junction such as a reciprocal single-stranded crossover between two homologous DNA duplexes (Holliday junction).. In terms of biological role, the RuvA-RuvB-RuvC complex processes Holliday junction (HJ) DNA during genetic recombination and DNA repair. Endonuclease that resolves HJ intermediates. Cleaves cruciform DNA by making single-stranded nicks across the HJ at symmetrical positions within the homologous arms, yielding a 5'-phosphate and a 3'-hydroxyl group; requires a central core of homology in the junction. The consensus cleavage sequence is 5'-(A/T)TT(C/G)-3'. Cleavage occurs on the 3'-side of the TT dinucleotide at the point of strand exchange. HJ branch migration catalyzed by RuvA-RuvB allows RuvC to scan DNA until it finds its consensus sequence, where it cleaves and resolves the cruciform DNA. The sequence is that of Crossover junction endodeoxyribonuclease RuvC from Rhodococcus jostii (strain RHA1).